Here is a 452-residue protein sequence, read N- to C-terminus: Neuromedin-K receptor (452 aa).

Residues 1–71 (MASVPTGENW…TNQFVQPSWR (71 aa)) are Extracellular-facing. 4 N-linked (GlcNAc...) asparagine glycosylation sites follow: asparagine 9, asparagine 23, asparagine 40, and asparagine 60. Residues 72 to 94 (IALWSLAYGLVVAVAVFGNLIVI) traverse the membrane as a helical segment. The Cytoplasmic segment spans residues 95 to 104 (WIILAHKRMR). The chain crosses the membrane as a helical span at residues 105 to 126 (TVTNYFLVNLAFSDASVAAFNT). Topologically, residues 127-146 (LVNFIYGVHSEWYFGANYCR) are extracellular. Cysteine 145 and cysteine 220 are oxidised to a cystine. The helical transmembrane segment at 147 to 168 (FQNFFPITAVFASIYSMTAIAV) threads the bilayer. Topologically, residues 169-188 (DRYMAIIDPLKPRLSATATK) are cytoplasmic. The helical transmembrane segment at 189–209 (IVIGSIWILAFLLAFPQCLYS) threads the bilayer. The Extracellular portion of the chain corresponds to 210-232 (KIKVMPGRTLCYVQWPEGPKQHF). A helical membrane pass occupies residues 233 to 257 (TYHIIVIILVYCFPLLIMGVTYTIV). The Cytoplasmic segment spans residues 258 to 286 (GITLWGGEIPGDTCDKYHEQLKAKRKVVK). Residues 287–308 (MMIIVVVTFAICWLPYHVYFIL) traverse the membrane as a helical segment. At 309 to 321 (TAIYQQLNRWKYI) the chain is on the extracellular side. Residues 322 to 346 (QQVYLASFWLAMSSTMYNPIIYCCL) traverse the membrane as a helical segment. Over 347–452 (NKRFRAGFKR…SPYTSVDEYS (106 aa)) the chain is Cytoplasmic. Cysteine 361 carries S-palmitoyl cysteine lipidation. The tract at residues 401 to 452 (DPSEGDPAKSSRKKRAVPRDPSANGCSHREFKSASTTSSFISSPYTSVDEYS) is disordered. The segment covering 433 to 452 (SASTTSSFISSPYTSVDEYS) has biased composition (low complexity).

It belongs to the G-protein coupled receptor 1 family. In terms of processing, the anchoring of this receptor to the plasma membrane is probably mediated by the palmitoylation of a cysteine residue.

The protein resides in the cell membrane. This is a receptor for the tachykinin neuropeptide neuromedin-K (neurokinin B). It is associated with G proteins that activate a phosphatidylinositol-calcium second messenger system. This chain is Neuromedin-K receptor (Tacr3), found in Mus musculus (Mouse).